The primary structure comprises 649 residues: Acetyl-coenzyme A synthetase (649 aa).

Residues 191–194, threonine 311, and asparagine 335 contribute to the CoA site; that span reads RGGR. ATP-binding positions include 387–389, 411–416, aspartate 500, and arginine 515; these read GEP and DTWWQT. Serine 523 contributes to the CoA binding site. Arginine 526 is an ATP binding site. Mg(2+)-binding residues include valine 537, histidine 539, and isoleucine 542. Arginine 584 is a binding site for CoA. An N6-acetyllysine modification is found at lysine 609.

The protein belongs to the ATP-dependent AMP-binding enzyme family. The cofactor is Mg(2+). Post-translationally, acetylated. Deacetylation by the SIR2-homolog deacetylase activates the enzyme.

The enzyme catalyses acetate + ATP + CoA = acetyl-CoA + AMP + diphosphate. Catalyzes the conversion of acetate into acetyl-CoA (AcCoA), an essential intermediate at the junction of anabolic and catabolic pathways. AcsA undergoes a two-step reaction. In the first half reaction, AcsA combines acetate with ATP to form acetyl-adenylate (AcAMP) intermediate. In the second half reaction, it can then transfer the acetyl group from AcAMP to the sulfhydryl group of CoA, forming the product AcCoA. The sequence is that of Acetyl-coenzyme A synthetase from Psychromonas ingrahamii (strain DSM 17664 / CCUG 51855 / 37).